A 319-amino-acid chain; its full sequence is Lipoyl synthase (319 aa).

Residues 1 to 29 form a disordered region; the sequence is MVVVVDTVSDKPIRPRHPEKAARPDALSP. Residues 8 to 29 are compositionally biased toward basic and acidic residues; sequence VSDKPIRPRHPEKAARPDALSP. [4Fe-4S] cluster contacts are provided by Cys61, Cys66, Cys72, Cys87, Cys91, Cys94, and Ser300. The region spanning 73–289 is the Radical SAM core domain; that stretch reads WDRKHATFMI…ESLAYAKGFL (217 aa).

The protein belongs to the radical SAM superfamily. Lipoyl synthase family. The cofactor is [4Fe-4S] cluster.

It localises to the cytoplasm. The enzyme catalyses [[Fe-S] cluster scaffold protein carrying a second [4Fe-4S](2+) cluster] + N(6)-octanoyl-L-lysyl-[protein] + 2 oxidized [2Fe-2S]-[ferredoxin] + 2 S-adenosyl-L-methionine + 4 H(+) = [[Fe-S] cluster scaffold protein] + N(6)-[(R)-dihydrolipoyl]-L-lysyl-[protein] + 4 Fe(3+) + 2 hydrogen sulfide + 2 5'-deoxyadenosine + 2 L-methionine + 2 reduced [2Fe-2S]-[ferredoxin]. Its pathway is protein modification; protein lipoylation via endogenous pathway; protein N(6)-(lipoyl)lysine from octanoyl-[acyl-carrier-protein]: step 2/2. In terms of biological role, catalyzes the radical-mediated insertion of two sulfur atoms into the C-6 and C-8 positions of the octanoyl moiety bound to the lipoyl domains of lipoate-dependent enzymes, thereby converting the octanoylated domains into lipoylated derivatives. In Rhodopseudomonas palustris (strain BisA53), this protein is Lipoyl synthase.